A 322-amino-acid polypeptide reads, in one-letter code: MNISFEKFLECLSIFMHSFFVLLMVVMCGAYMSFVERRLLALFQNRYGPNRVGWNGSLQLLADLIKIMFKEDWIPPFSDRYIFVLAPAIAFIISLMIIPVIPFTPSSVILHCNVGVLFFLMISALTVYSVLLAGWSSNNKYALIGAVRSIAQTLSYEVFLGLSLMGIVAKSGSFDLLNIVQDQKYLWNIVPQFLGFVVFFISGMALCHRHPFDQPESEQELVAGYHIEYSGMKFSLFFISEYISVISISSFMVTLFFGGWYGPWFPPVVWFIIKTFMIVLFFVLIRASLPRPRYDYVMLVGWKFLLPIALLNLLVTAGYILI.

8 helical membrane passes run 14 to 34 (IFMH…YMSF), 81 to 101 (YIFV…IPVI), 114 to 134 (VGVL…LLAG), 149 to 169 (SIAQ…GIVA), 186 to 206 (LWNI…GMAL), 237 to 257 (FFIS…TLFF), 265 to 285 (FPPV…FVLI), and 302 to 322 (WKFL…YILI).

Belongs to the complex I subunit 1 family. In terms of assembly, NDH-1 is composed of 13 different subunits. Subunits NuoA, H, J, K, L, M, N constitute the membrane sector of the complex.

Its subcellular location is the cell inner membrane. It carries out the reaction a quinone + NADH + 5 H(+)(in) = a quinol + NAD(+) + 4 H(+)(out). Functionally, NDH-1 shuttles electrons from NADH, via FMN and iron-sulfur (Fe-S) centers, to quinones in the respiratory chain. The immediate electron acceptor for the enzyme in this species is believed to be ubiquinone. Couples the redox reaction to proton translocation (for every two electrons transferred, four hydrogen ions are translocated across the cytoplasmic membrane), and thus conserves the redox energy in a proton gradient. This subunit may bind ubiquinone. The protein is NADH-quinone oxidoreductase subunit H of Blochmanniella floridana.